A 255-amino-acid polypeptide reads, in one-letter code: Hydroxyacylglutathione hydrolase (255 aa).

Residues His55, His57, Asp59, His60, His113, Asp132, and His170 each coordinate Zn(2+).

It belongs to the metallo-beta-lactamase superfamily. Glyoxalase II family. In terms of assembly, monomer. The cofactor is Zn(2+).

It catalyses the reaction an S-(2-hydroxyacyl)glutathione + H2O = a 2-hydroxy carboxylate + glutathione + H(+). Its pathway is secondary metabolite metabolism; methylglyoxal degradation; (R)-lactate from methylglyoxal: step 2/2. Its function is as follows. Thiolesterase that catalyzes the hydrolysis of S-D-lactoyl-glutathione to form glutathione and D-lactic acid. This is Hydroxyacylglutathione hydrolase from Methylobacterium nodulans (strain LMG 21967 / CNCM I-2342 / ORS 2060).